The primary structure comprises 520 residues: Keratin, type II cytoskeletal 4 (520 aa).

A head region spans residues 1-136; sequence MIARQQCVRG…DPEIQKVRTE (136 aa). Position 13 is an omega-N-methylarginine (arginine 13). The tract at residues 137–172 is coil 1A; the sequence is EREQIKLLNNKFASFIDKVQFLEQQNKVLETKWNLL. The 314-residue stretch at 137–450 folds into the IF rod domain; it reads EREQIKLLNN…KLLEGEEYRM (314 aa). A linker 1 region spans residues 173–191; it reads QQQTTTTSSKNLEPLFETY. Residues 192 to 284 form a coil 1B region; it reads LSVLRKQLDT…LYDAELSQMQ (93 aa). The linker 12 stretch occupies residues 285–307; it reads THVSDTSVVLSMDNNRNLDLDSI. Residues 308–447 form a coil 2 region; sequence IAEVRAQYEE…TYRKLLEGEE (140 aa). The tract at residues 448–520 is tail; sequence YRMSGECQSA…ISTTTLNKRR (73 aa). The segment at 500–520 is disordered; the sequence is GSVSGSSSSKIISTTTLNKRR. Over residues 503 to 514 the composition is skewed to low complexity; that stretch reads SGSSSSKIISTT.

This sequence belongs to the intermediate filament family. In terms of assembly, heterotetramer of two type I and two type II keratins. Keratin-4 is generally associated with keratin-13. Detected in the suprabasal layer of the stratified epithelium of the esophagus, exocervix, vagina, mouth and lingual mucosa, and in cells and cell clusters in the mucosa and serous gland ducts of the esophageal submucosa (at protein level). Expressed widely in the exocervix and esophageal epithelium, with lowest levels detected in the basal cell layer.

The chain is Keratin, type II cytoskeletal 4 (KRT4) from Homo sapiens (Human).